The following is a 275-amino-acid chain: 3-oxo-isoapionate decarboxylase (275 aa).

It carries out the reaction 3-oxoisoapionate + H(+) = L-erythrulose + CO2. Its pathway is carbohydrate metabolism. Functionally, involved in catabolism of D-apiose. Catalyzes decarboxylation of 3-oxo-isoapionate to L-erythrulose. The protein is 3-oxo-isoapionate decarboxylase of Pectobacterium atrosepticum (strain SCRI 1043 / ATCC BAA-672) (Erwinia carotovora subsp. atroseptica).